We begin with the raw amino-acid sequence, 123 residues long: Ribosome-binding factor A (123 aa).

This sequence belongs to the RbfA family. Monomer. Binds 30S ribosomal subunits, but not 50S ribosomal subunits or 70S ribosomes.

Its subcellular location is the cytoplasm. One of several proteins that assist in the late maturation steps of the functional core of the 30S ribosomal subunit. Associates with free 30S ribosomal subunits (but not with 30S subunits that are part of 70S ribosomes or polysomes). Required for efficient processing of 16S rRNA. May interact with the 5'-terminal helix region of 16S rRNA. The chain is Ribosome-binding factor A from Acetivibrio thermocellus (strain ATCC 27405 / DSM 1237 / JCM 9322 / NBRC 103400 / NCIMB 10682 / NRRL B-4536 / VPI 7372) (Clostridium thermocellum).